A 330-amino-acid chain; its full sequence is 5'-AMP-activated protein kinase subunit gamma-1 (330 aa).

The segment covering 1-12 (MESVAAESAPAP) has biased composition (low complexity). Residues 1–25 (MESVAAESAPAPENEHSQETPESNS) are disordered. CBS domains lie at 42 to 102 (PTSS…KSAL), 124 to 186 (SFKP…PKPE), and 197 to 259 (IGTY…NLDV). ADP is bound by residues Arg-69, 84–89 (MLTITD), Val-129, 150–151 (HR), and Lys-169. Residues Arg-69, 84-89 (MLTITD), Val-129, His-150, 150-151 (HR), Lys-169, Thr-199, Ala-204, 225-226 (SA), and 241-244 (SKFD) contribute to the AMP site. Residues Arg-69, 84-89 (MLTITD), Val-129, 150-151 (HR), Arg-151, and Lys-169 each bind ATP. The short motif at 137–158 (LFDAVSSLIRNKIHRLPVIDPE) is the AMPK pseudosubstrate element. 241–244 (SKFD) contacts ADP. An ATP-binding site is contributed by 241–244 (SKFD). Ser-260 carries the phosphoserine; by ULK1 modification. Thr-262 is modified (phosphothreonine; by ULK1). Arg-268 contacts ADP. Arg-268 lines the AMP pocket. Arg-268 is a binding site for ATP. The residue at position 269 (Ser-269) is a Phosphoserine; by ULK1. Positions 271–328 (YFEGVLKCYLHETLEAIINRLVEAEVHRLVVVDEHDVVKGIVSLSDILQALVLTGGEK) constitute a CBS 4 domain. ADP-binding positions include Leu-276 and 297–298 (HR). AMP-binding positions include Leu-276, His-297, 297 to 298 (HR), and 313 to 316 (SLSD). ATP is bound by residues Leu-276 and 297–298 (HR).

The protein belongs to the 5'-AMP-activated protein kinase gamma subunit family. AMPK is a heterotrimer of an alpha catalytic subunit (PRKAA1 or PRKAA2), a beta (PRKAB1 or PRKAB2) and a gamma non-catalytic subunits (PRKAG1, PRKAG2 or PRKAG3). Interacts with FNIP1 and FNIP2. In terms of processing, phosphorylated by ULK1 and ULK2; leading to negatively regulate AMPK activity and suggesting the existence of a regulatory feedback loop between ULK1, ULK2 and AMPK. There is some ambiguity for a phosphosite: Ser-260/Thr-262. Glycosylated; O-GlcNAcylated by OGT, promoting the AMP-activated protein kinase (AMPK) activity. Highly expressed in heart and brain, also found in kidney, white adipose tissue, lung and spleen.

AMP/ATP-binding subunit of AMP-activated protein kinase (AMPK), an energy sensor protein kinase that plays a key role in regulating cellular energy metabolism. In response to reduction of intracellular ATP levels, AMPK activates energy-producing pathways and inhibits energy-consuming processes: inhibits protein, carbohydrate and lipid biosynthesis, as well as cell growth and proliferation. AMPK acts via direct phosphorylation of metabolic enzymes, and by longer-term effects via phosphorylation of transcription regulators. Also acts as a regulator of cellular polarity by remodeling the actin cytoskeleton; probably by indirectly activating myosin. Gamma non-catalytic subunit mediates binding to AMP, ADP and ATP, leading to activate or inhibit AMPK: AMP-binding results in allosteric activation of alpha catalytic subunit (PRKAA1 or PRKAA2) both by inducing phosphorylation and preventing dephosphorylation of catalytic subunits. ADP also stimulates phosphorylation, without stimulating already phosphorylated catalytic subunit. ATP promotes dephosphorylation of catalytic subunit, rendering the AMPK enzyme inactive. This is 5'-AMP-activated protein kinase subunit gamma-1 (Prkag1) from Rattus norvegicus (Rat).